Reading from the N-terminus, the 1021-residue chain is Sodium/potassium-transporting ATPase subunit alpha-1 (1021 aa).

Residues 1–5 (MGKGV) constitute a propeptide that is removed on maturation. Positions 1-11 (MGKGVGRDKYE) are enriched in basic and acidic residues. Residues 1-36 (MGKGVGRDKYEPAAVSEHGDKKKAKKERDMDELKKE) are disordered. Over 6–85 (GRDKYEPAAV…NALTPPPTTP (80 aa)) the chain is Cytoplasmic. Lys-9 is modified (N6-acetyllysine). At Tyr-10 the chain carries Phosphotyrosine. A Phosphoserine; by PKC modification is found at Ser-16. Residue Lys-21 is modified to N6-acetyllysine. Over residues 26 to 36 (KERDMDELKKE) the composition is skewed to basic and acidic residues. Phosphoserine is present on residues Ser-38 and Ser-45. Residues 80–82 (PPP) form a phosphoinositide-3 kinase binding region. A helical membrane pass occupies residues 86–106 (EWVKFCRQLFGGFSMLLWIGA). Residues 107–129 (VLCFLAYGIQAATEEEPQNDNLY) lie on the Extracellular side of the membrane. Residues 130-150 (LGVVLSAVVIITGCFSYYQEA) traverse the membrane as a helical segment. Residues 151-286 (KSSKIMESFK…GGQTPIAAEI (136 aa)) lie on the Cytoplasmic side of the membrane. Position 226 is a phosphoserine (Ser-226). Phosphotyrosine is present on Tyr-258. Residues 287 to 306 (EHFIHIITGVAVFLGVSFFI) traverse the membrane as a helical segment. Over 307-318 (LSLILEYTWLEA) the chain is Extracellular. The helical transmembrane segment at 319–336 (VIFLIGIIVANVPEGLLA) threads the bilayer. At 337–770 (TVTVCLTLTA…EEGRLIFDNL (434 aa)) the chain is on the cytoplasmic side. The active-site 4-aspartylphosphate intermediate is Asp-374. 2 positions are modified to phosphoserine: Ser-450 and Ser-482. Lys-485 is a binding site for ATP. At Tyr-540 the chain carries Phosphotyrosine. Positions 594–715 (RAAVPDAVGK…QGAIVAVTGD (122 aa)) are mediates interaction with SCN7A. The residue at position 666 (Ser-666) is a Phosphoserine. Asp-715 and Asp-719 together coordinate Mg(2+). A helical transmembrane segment spans residues 771-790 (KKSIAYTLTSNIPEITPFLI). The Extracellular segment spans residues 791–800 (FIIANIPLPL). A helical transmembrane segment spans residues 801-821 (GTVTILCIDLGTDMVPAISLA). Topologically, residues 822-841 (YEQAESDIMKRQPRNPQTDK) are cytoplasmic. A helical membrane pass occupies residues 842-864 (LVNERLISMAYGQIGMIQALGGF). The Extracellular segment spans residues 865–916 (FTYFVIMAENGFLPNHLLGIRVTWDDRWINDVEDSYGQQWTYEQRKIVEFTC). The helical transmembrane segment at 917–936 (HTAFFVSIVVVQWADLVICK) threads the bilayer. Residues 937–949 (TRRNSVFQQGMKN) lie on the Cytoplasmic side of the membrane. Ser-941 is subject to Phosphoserine; by PKA. A helical membrane pass occupies residues 950–968 (KILIFGLFEETALAAFLSY). Residues 969–983 (CPGMGVALRMYPLKP) lie on the Extracellular side of the membrane. Residues 984-1004 (TWWFCAFPYSLLIFVYDEVRK) form a helical membrane-spanning segment. Over 1005–1021 (LIIRRRPGGWVEKETYY) the chain is Cytoplasmic.

This sequence belongs to the cation transport ATPase (P-type) (TC 3.A.3) family. Type IIC subfamily. The sodium/potassium-transporting ATPase is composed of a catalytic alpha subunit, an auxiliary non-catalytic beta subunit and an additional regulatory subunit. Interacts with regulatory subunit FXYD1. Interacts with regulatory subunit FXYD3. Interacts with SIK1. Interacts with SLC35G1 and STIM1. Interacts with CLN3; this interaction regulates the sodium/potassium-transporting ATPase complex localization at the plasma membrane. Interacts with SCN7A; activates ATP1A1 P-type sodium:potassium-exchanging transporter activity which indirectly signals to nearby neurons to regulate sodium homeostasis. Phosphorylation on Tyr-10 modulates pumping activity. Phosphorylation of Ser-941 by PKA modulates the response of ATP1A1 to PKC. Dephosphorylation by protein phosphatase 2A (PP2A) following increases in intracellular sodium, leading to increase catalytic activity.

It localises to the cell membrane. The protein resides in the basolateral cell membrane. Its subcellular location is the sarcolemma. It is found in the cell projection. The protein localises to the axon. It localises to the melanosome. It catalyses the reaction K(+)(out) + Na(+)(in) + ATP + H2O = K(+)(in) + Na(+)(out) + ADP + phosphate + H(+). Its function is as follows. This is the catalytic component of the active enzyme, which catalyzes the hydrolysis of ATP coupled with the exchange of sodium and potassium ions across the plasma membrane. This action creates the electrochemical gradient of sodium and potassium ions, providing the energy for active transport of various nutrients. Could also be part of an osmosensory signaling pathway that senses body-fluid sodium levels and controls salt intake behavior as well as voluntary water intake to regulate sodium homeostasis. The chain is Sodium/potassium-transporting ATPase subunit alpha-1 (ATP1A1) from Bos taurus (Bovine).